The following is a 994-amino-acid chain: Phosphoenolpyruvate carboxylase (994 aa).

The disordered stretch occupies residues 1–67; sequence MKAVRSDKTT…GRTREDKDHP (67 aa). Composition is skewed to low complexity over residues 9 to 24 and 34 to 57; these read TTQA…PAKA and AAPQ…PKAN. Active-site residues include histidine 204 and lysine 646.

This sequence belongs to the PEPCase type 1 family. It depends on Mg(2+) as a cofactor.

It catalyses the reaction oxaloacetate + phosphate = phosphoenolpyruvate + hydrogencarbonate. Its function is as follows. Forms oxaloacetate, a four-carbon dicarboxylic acid source for the tricarboxylic acid cycle. This chain is Phosphoenolpyruvate carboxylase, found in Paraburkholderia xenovorans (strain LB400).